The primary structure comprises 311 residues: MTLHEPLGLIDAARELRGFQAEPAQMRAGAPGKVGRLRLGFSLRDGRSVLHDLYRAAPLLVQQALYWDEAMPELPVCPIISVGGGILQGDRYTIDIAVGEGACAHVSTQGANRIHCMDANYASQHQTVTVAAGGYLEYLPDFTIPYRGSRFLSRTDLVVAADATLLYGEMVLAGRKHHHVEERFGFDLLSMDVNLRRPGGHKLVAEKILIEKGDPTIAFAAVMRGFDAFANILCVTPPETAARIKERFEPHFPIEAPRALSGVSRLPNAAGLMLRAVGVETYDVRHEVRRFWRIVREEARDRSLPAEPYWR.

The protein belongs to the UreD family. As to quaternary structure, ureD, UreF and UreG form a complex that acts as a GTP-hydrolysis-dependent molecular chaperone, activating the urease apoprotein by helping to assemble the nickel containing metallocenter of UreC. The UreE protein probably delivers the nickel.

It localises to the cytoplasm. In terms of biological role, required for maturation of urease via the functional incorporation of the urease nickel metallocenter. The polypeptide is Urease accessory protein UreD 2 (Methylorubrum extorquens (strain PA1) (Methylobacterium extorquens)).